Here is a 213-residue protein sequence, read N- to C-terminus: LexA repressor (213 aa).

Positions 29–49 form a DNA-binding region, H-T-H motif; it reads VREICNAVGFKSTSTVHSYLE. Residues serine 136 and lysine 173 each act as for autocatalytic cleavage activity in the active site.

This sequence belongs to the peptidase S24 family. Homodimer.

The catalysed reaction is Hydrolysis of Ala-|-Gly bond in repressor LexA.. Functionally, represses a number of genes involved in the response to DNA damage (SOS response), including recA and lexA. In the presence of single-stranded DNA, RecA interacts with LexA causing an autocatalytic cleavage which disrupts the DNA-binding part of LexA, leading to derepression of the SOS regulon and eventually DNA repair. The protein is LexA repressor of Acetivibrio thermocellus (strain ATCC 27405 / DSM 1237 / JCM 9322 / NBRC 103400 / NCIMB 10682 / NRRL B-4536 / VPI 7372) (Clostridium thermocellum).